The primary structure comprises 212 residues: UPF0319 protein PBPRA2789 (212 aa).

Positions 1-21 are cleaved as a signal peptide; it reads MKKILLAFTLPLVLASQTAMA.

The protein belongs to the UPF0319 family.

The polypeptide is UPF0319 protein PBPRA2789 (Photobacterium profundum (strain SS9)).